The sequence spans 374 residues: MEILRIEPTPSPNTMKVVLSYTREDKLSNTYKKVEETQPRFINQLLSIDGITSIFHVMNFLAVDKAPKADWEVILPDIKAAFSDANKVLESVNEPQIDNHFGEIKAELLTFKGIPYQIKLTSADQELREQLPQTYVDHMTQAQTAHDNIVFMRKWLDLGNRYGNIEEVMDGVLEEVLATYPESQLPVLVKHALEENHATNNYHFYRHVSLDEYHATDNWKTRLRMLNHFPKPTFEDIPLLDLALSDEKVPVRRQAIVLLGMIESKEILPYLYKGLRDKSPAVRRTAGDCISDLGYPEALPEMVLLLDDPQKIVRWRAAMFIFDEGNAEQLPALKAHINDNAFEVKLQIEMAISRIENGDEALGSVWKQMANRTI.

Belongs to the CvfC family.

In terms of biological role, required for hemolysin production. In Staphylococcus aureus (strain N315), this protein is Conserved virulence factor C (cvfC).